Here is a 1249-residue protein sequence, read N- to C-terminus: MAGE-like protein 2 (1249 aa).

Polar residues predominate over residues M1–D10. Disordered stretches follow at residues M1 to D50, A134 to P233, Q300 to A327, P349 to T378, R410 to A433, Q515 to P569, Q647 to T679, L714 to S746, P862 to G910, and V930 to G957. Pro residues-rich tracts occupy residues P40 to I49 and A140 to P233. The segment covering P301–P311 has biased composition (low complexity). 2 stretches are compositionally biased toward pro residues: residues A312–Q324 and P349–P358. The segment covering Q369–T378 has biased composition (polar residues). The segment covering R410–Q432 has biased composition (pro residues). Low complexity predominate over residues Q525–P552. The span at A553–P567 shows a compositional bias: pro residues. A compositionally biased stretch (low complexity) spans Q662–A675. Basic and acidic residues predominate over residues S725–S746. The span at P862 to A871 shows a compositional bias: low complexity. Over residues R881–H891 the composition is skewed to basic residues. The MAGE domain occupies L1020–A1219. Over residues E1226 to T1235 the composition is skewed to acidic residues. The disordered stretch occupies residues E1226–R1249.

Part of a complex consisting of MAGEL2, TRIM27 and USP7; directly interacts with USP7. Interacts with TRIM27. Interacts with VPS35; leading to recruitment at retromer-containing endosomes. Interacts with BMAL1 and PER2. In terms of tissue distribution, expressed in placenta, fetal and adult brain. Not detected in heart and small intestine, very low levels in fibroblasts. Not expressed in brain of a Prader-Willi patient.

It is found in the early endosome. The protein localises to the cytoplasm. It localises to the nucleus. Probably enhances ubiquitin ligase activity of RING-type zinc finger-containing E3 ubiquitin-protein ligases, possibly through recruitment and/or stabilization of the Ubl-conjugating enzyme (E2) at the E3:substrate complex. Acts as a regulator of retrograde transport via its interaction with VPS35. Recruited to retromer-containing endosomes and promotes the formation of 'Lys-63'-linked polyubiquitin chains at 'Lys-220' of WASHC1 together with TRIM27, leading to promote endosomal F-actin assembly. Regulates the circadian clock by repressing the transcriptional activator activity of the CLOCK-BMAL1 heterodimer. Significantly promotes the cytoplasmic accumulation of CLOCK. The sequence is that of MAGE-like protein 2 (MAGEL2) from Homo sapiens (Human).